Here is a 388-residue protein sequence, read N- to C-terminus: Homoserine O-acetyltransferase (388 aa).

The AB hydrolase-1 domain maps to proline 55–glutamate 354. Serine 150 (nucleophile) is an active-site residue. Arginine 220 lines the substrate pocket. Active-site residues include aspartate 318 and histidine 348. Position 349 (aspartate 349) interacts with substrate.

It belongs to the AB hydrolase superfamily. MetX family. In terms of assembly, homodimer.

Its subcellular location is the cytoplasm. It catalyses the reaction L-homoserine + acetyl-CoA = O-acetyl-L-homoserine + CoA. It functions in the pathway amino-acid biosynthesis; L-methionine biosynthesis via de novo pathway; O-acetyl-L-homoserine from L-homoserine: step 1/1. Functionally, transfers an acetyl group from acetyl-CoA to L-homoserine, forming acetyl-L-homoserine. In Corynebacterium urealyticum (strain ATCC 43042 / DSM 7109), this protein is Homoserine O-acetyltransferase.